Here is a 465-residue protein sequence, read N- to C-terminus: Protein maelstrom (465 aa).

The HMG box DNA-binding region spans 2–69 (APKKHSGFMM…ADRGKRERLN (68 aa)). The disordered stretch occupies residues 415–440 (MRKSSKHTGPSVSTQRERNAGAWNLP).

Belongs to the maelstrom family.

It localises to the cytoplasm. Its subcellular location is the nucleus. Functionally, involved both in the piRNA and miRNA metabolic processes. As a component of the meiotic nuage, plays a central role during oogenesis by repressing transposable elements and preventing their mobilization, which is essential for the germline integrity. Repression of transposable elements is mediated via the piRNA metabolic process, which mediates the repression of transposable elements during meiosis by forming complexes composed of piRNAs and Piwi proteins and governs the repression of transposons. As a nuclear component, it is required for proper differentiation in the germline stem cell (GSC) lineage by repressing microRNA-7 (miR-7), thereby acting as an indirect regulator of bag-of-marbles (Bam). Acts by binding to the promoter of miR-7 gene and repressing its expression; miR-7 repression alleviates the Bam repression by miR-7, thereby allowing differentiation in the germline stem cell (GSC) lineage. The sequence is that of Protein maelstrom (mael) from Drosophila yakuba (Fruit fly).